We begin with the raw amino-acid sequence, 513 residues long: ATP synthase subunit alpha (513 aa).

Position 169-176 (169-176 (GDRQTGKT)) interacts with ATP.

The protein belongs to the ATPase alpha/beta chains family. In terms of assembly, F-type ATPases have 2 components, CF(1) - the catalytic core - and CF(0) - the membrane proton channel. CF(1) has five subunits: alpha(3), beta(3), gamma(1), delta(1), epsilon(1). CF(0) has three main subunits: a(1), b(2) and c(9-12). The alpha and beta chains form an alternating ring which encloses part of the gamma chain. CF(1) is attached to CF(0) by a central stalk formed by the gamma and epsilon chains, while a peripheral stalk is formed by the delta and b chains.

It localises to the cell inner membrane. The catalysed reaction is ATP + H2O + 4 H(+)(in) = ADP + phosphate + 5 H(+)(out). Functionally, produces ATP from ADP in the presence of a proton gradient across the membrane. The alpha chain is a regulatory subunit. The protein is ATP synthase subunit alpha of Vesicomyosocius okutanii subsp. Calyptogena okutanii (strain HA).